Here is a 733-residue protein sequence, read N- to C-terminus: MCDLSSALIKEGWYLTDEGIEECKSSSEKEKTSPTDIIQVALNNDLRPIGKSFLPADINSGRIEKLEGPCVLQVQKIRNVAASKDHEESQAAPRMLRVQMTDGHTACTGLEFKQLSKISLNTPPGTKVKLLGVVQVKNGILLLDDSKIAVLGGEVDHMIEKWEFQRSLAKHSRRNIGAEGGPPPFVPFGQKCVHKEQVDSRALDQRKTLQSTNAVKSADDNDEFEKQRTAAIAEVAKSKETRTFGGGGNAGGNLANPGSSYKSRDTYQRKREEREKPWTENKSDGVYRDLVDERALRDIMEMGFNREAARQALLDNNNNLEVALNLLLTRANQPRAAPVEQSRPPPRGKGRGKGRSRQDEDEEAGGRPSGPSTLFDFLESKMGTFSIDDSKPSQQDHQTKMNFSNSDQMSRDAGQFKPPPRNDGRSQRNDRPPRFQKDGDFPKPTPASSSFSQPQKWRDGERTGRGGGPERWKNESQDARNAPVSYSSSFSKSREQQGASGKELNKEQDGTGPASFRKIQSNGPAPPKFSTPADPKMRNEPNNRRKGRPERPNSGYFEHSQDALGKKDFQDEGQFVKVGPVSNTPLPNGDLEHRRTGPIKPHFSAPPPRQTNMHNPASKRRSGPIKGPRDSVDINNFVNWKAGDQCLALYWEDNKFYRARIDAVHPSGSTAVVVFSDYGNCEEVLLDSIKPLHMDDDEDVYYENSLEFRRGGDGQPRRSRPTQQYYQPPRARD.

The interval 241–281 (TRTFGGGGNAGGNLANPGSSYKSRDTYQRKREEREKPWTEN) is disordered. Positions 262–281 (KSRDTYQRKREEREKPWTEN) are enriched in basic and acidic residues. Positions 290–330 (LVDERALRDIMEMGFNREAARQALLDNNNNLEVALNLLLTR) constitute a UBA domain. The segment at 333-630 (QPRAAPVEQS…RSGPIKGPRD (298 aa)) is disordered. A compositionally biased stretch (basic residues) spans 346 to 355 (PRGKGRGKGR). Over residues 392–408 (PSQQDHQTKMNFSNSDQ) the composition is skewed to polar residues. Residues 420-441 (PRNDGRSQRNDRPPRFQKDGDF) show a composition bias toward basic and acidic residues. The span at 446–455 (PASSSFSQPQ) shows a compositional bias: polar residues. The span at 456–478 (KWRDGERTGRGGGPERWKNESQD) shows a compositional bias: basic and acidic residues. The span at 484–499 (VSYSSSFSKSREQQGA) shows a compositional bias: polar residues. Positions 559–570 (HSQDALGKKDFQ) are enriched in basic and acidic residues. The Tudor domain occupies 639–699 (NWKAGDQCLA…KPLHMDDDED (61 aa)). Over residues 706 to 716 (LEFRRGGDGQP) the composition is skewed to basic and acidic residues. The tract at residues 706-733 (LEFRRGGDGQPRRSRPTQQYYQPPRARD) is disordered.

As to quaternary structure, component of mRNA stress granules.

It is found in the cytoplasm. Its subcellular location is the nucleus. Scaffolding protein that specifically recognizes and binds dimethylarginine-containing proteins. Plays a role in the regulation of translation of target mRNAs by binding Arg/Gly-rich motifs (GAR) in dimethylarginine-containing proteins. In nucleus, acts as a coactivator: recognizes and binds asymmetric dimethylation on the core histone tails associated with transcriptional activation (H3R17me2a and H4R3me2a) and recruits proteins at these arginine-methylated loci. In cytoplasm, acts as an antiviral factor that participates in the assembly of stress granules together with G3BP1. The sequence is that of Tudor domain-containing protein 3 (tdrd3) from Danio rerio (Zebrafish).